The chain runs to 54 residues: Beta-2-microglobulin (54 aa).

The Ig-like C1-type domain maps to 3–41 (KVELSDLSFNKDWSFYLLAHREFVPTATDKYACRVSHIT).

The protein belongs to the beta-2-microglobulin family. Heterodimer of an alpha chain and a beta chain. Beta-2-microglobulin is the beta-chain of major histocompatibility complex class I molecules.

It is found in the secreted. Its function is as follows. Component of the class I major histocompatibility complex (MHC). Involved in the presentation of peptide antigens to the immune system. This is Beta-2-microglobulin (B2M) from Mesocricetus auratus (Golden hamster).